A 277-amino-acid polypeptide reads, in one-letter code: Large ribosomal subunit protein uL2 (277 aa).

The segment at threonine 219 to lysine 277 is disordered.

It belongs to the universal ribosomal protein uL2 family. As to quaternary structure, part of the 50S ribosomal subunit. Forms a bridge to the 30S subunit in the 70S ribosome.

In terms of biological role, one of the primary rRNA binding proteins. Required for association of the 30S and 50S subunits to form the 70S ribosome, for tRNA binding and peptide bond formation. It has been suggested to have peptidyltransferase activity; this is somewhat controversial. Makes several contacts with the 16S rRNA in the 70S ribosome. This Clostridium botulinum (strain ATCC 19397 / Type A) protein is Large ribosomal subunit protein uL2.